The primary structure comprises 366 residues: Aminomethyltransferase (366 aa).

It belongs to the GcvT family. In terms of assembly, the glycine cleavage system is composed of four proteins: P, T, L and H.

The enzyme catalyses N(6)-[(R)-S(8)-aminomethyldihydrolipoyl]-L-lysyl-[protein] + (6S)-5,6,7,8-tetrahydrofolate = N(6)-[(R)-dihydrolipoyl]-L-lysyl-[protein] + (6R)-5,10-methylene-5,6,7,8-tetrahydrofolate + NH4(+). In terms of biological role, the glycine cleavage system catalyzes the degradation of glycine. The chain is Aminomethyltransferase from Chlorobium chlorochromatii (strain CaD3).